The sequence spans 209 residues: Phosphoheptose isomerase (209 aa).

One can recognise an SIS domain in the interval 50–209 (IAETFRNGGK…ELVESMMGYA (160 aa)). 65 to 67 (NGG) is a binding site for substrate. Histidine 74 and glutamate 78 together coordinate Zn(2+). Residues glutamate 78, 109–110 (ND), 135–137 (STS), serine 140, and glutamine 188 each bind substrate. The Zn(2+) site is built by glutamine 188 and histidine 196.

This sequence belongs to the SIS family. GmhA subfamily. Zn(2+) is required as a cofactor.

The protein localises to the cytoplasm. The catalysed reaction is 2 D-sedoheptulose 7-phosphate = D-glycero-alpha-D-manno-heptose 7-phosphate + D-glycero-beta-D-manno-heptose 7-phosphate. The protein operates within carbohydrate biosynthesis; D-glycero-D-manno-heptose 7-phosphate biosynthesis; D-glycero-alpha-D-manno-heptose 7-phosphate and D-glycero-beta-D-manno-heptose 7-phosphate from sedoheptulose 7-phosphate: step 1/1. Functionally, catalyzes the isomerization of sedoheptulose 7-phosphate in D-glycero-D-manno-heptose 7-phosphate. The protein is Phosphoheptose isomerase of Chlorobaculum parvum (strain DSM 263 / NCIMB 8327) (Chlorobium vibrioforme subsp. thiosulfatophilum).